A 181-amino-acid chain; its full sequence is Large ribosomal subunit protein uL5 (181 aa).

The protein belongs to the universal ribosomal protein uL5 family. Part of the 50S ribosomal subunit; part of the 5S rRNA/L5/L18/L25 subcomplex. Contacts the 5S rRNA and the P site tRNA. Forms a bridge to the 30S subunit in the 70S ribosome.

Its function is as follows. This is one of the proteins that bind and probably mediate the attachment of the 5S RNA into the large ribosomal subunit, where it forms part of the central protuberance. In the 70S ribosome it contacts protein S13 of the 30S subunit (bridge B1b), connecting the 2 subunits; this bridge is implicated in subunit movement. Contacts the P site tRNA; the 5S rRNA and some of its associated proteins might help stabilize positioning of ribosome-bound tRNAs. The protein is Large ribosomal subunit protein uL5 of Onion yellows phytoplasma (strain OY-M).